The sequence spans 591 residues: MANSDEIHYDLVEDDEFDIVNIVVEGLDETSIHSPPPSVSAATHGGVKNPSFSQRRTSGRHDFQKWLHEELGKYPAKTHAQKVVEELDAPKSGLIYLRGFNEPLYPYSDQGPPFRQQRHFFYLSGADFPGCAVTYDIPRQHLIVWIRRNDPRLSLWYGTTPSIEEVKSKSDVSDVRYIDDVTKYLHANLTPDTTLFLLHPDQTPKLEPPSLNLRHRFKGPKIDTTSLLPAIEAARVIKTPHEISLIRRAVALTSLAHRMVLQRIKHLSNEREAHAVFEGFCISQGAPRQSYAVIAASGANASTLHYEANDQPLEGKQTMLLDAGCEWGCYASDVTRTFPLKGKWTKEGEEIYKVVERMQRETIDAIRPGRLYYKLHLVACLVAVEELMKLGILHNGTRTEILAKGTVAAFFPHGLGHHVGLEVHDVSGRERLLLSSSSSSGLSRQAISGSRRLPPPRNMKREQVTPEDLAAMYREAMMDTAGDEVEQSAVAPPPPYRGRQRLKENMVVTVEPGIYFHRPYIQSFFLSNPDHAKYINTKVLDRYWDVGGVRIEDCILVTKDGYENLTTAPKGKEALKIINAGIPGFPCDGKA.

A disordered region spans residues 31–59 (SIHSPPPSVSAATHGGVKNPSFSQRRTSG). Residues aspartate 322 and aspartate 333 each coordinate Mn(2+). Low complexity predominate over residues 441 to 450 (GLSRQAISGS). The segment at 441-460 (GLSRQAISGSRRLPPPRNMK) is disordered. Mn(2+)-binding residues include glutamate 511 and glutamate 552.

It belongs to the peptidase M24B family. It depends on Mn(2+) as a cofactor.

It catalyses the reaction Release of any N-terminal amino acid, including proline, that is linked to proline, even from a dipeptide or tripeptide.. Its function is as follows. Catalyzes the removal of a penultimate prolyl residue from the N-termini of peptides. The protein is Probable Xaa-Pro aminopeptidase PEPP (PEPP) of Sordaria macrospora (strain ATCC MYA-333 / DSM 997 / K(L3346) / K-hell).